The primary structure comprises 292 residues: 4-hydroxy-tetrahydrodipicolinate synthase (292 aa).

Position 45 (threonine 45) interacts with pyruvate. Tyrosine 133 functions as the Proton donor/acceptor in the catalytic mechanism. Lysine 162 (schiff-base intermediate with substrate) is an active-site residue. Isoleucine 204 lines the pyruvate pocket.

The protein belongs to the DapA family. As to quaternary structure, homotetramer; dimer of dimers.

The protein localises to the cytoplasm. It carries out the reaction L-aspartate 4-semialdehyde + pyruvate = (2S,4S)-4-hydroxy-2,3,4,5-tetrahydrodipicolinate + H2O + H(+). The protein operates within amino-acid biosynthesis; L-lysine biosynthesis via DAP pathway; (S)-tetrahydrodipicolinate from L-aspartate: step 3/4. In terms of biological role, catalyzes the condensation of (S)-aspartate-beta-semialdehyde [(S)-ASA] and pyruvate to 4-hydroxy-tetrahydrodipicolinate (HTPA). In Oleidesulfovibrio alaskensis (strain ATCC BAA-1058 / DSM 17464 / G20) (Desulfovibrio alaskensis), this protein is 4-hydroxy-tetrahydrodipicolinate synthase.